Here is a 372-residue protein sequence, read N- to C-terminus: Alanine racemase (372 aa).

Lys37 acts as the Proton acceptor; specific for D-alanine in catalysis. Position 37 is an N6-(pyridoxal phosphate)lysine (Lys37). Residue Arg136 coordinates substrate. The active-site Proton acceptor; specific for L-alanine is the Tyr265. Met313 is a substrate binding site.

Belongs to the alanine racemase family. Requires pyridoxal 5'-phosphate as cofactor.

It catalyses the reaction L-alanine = D-alanine. It participates in amino-acid biosynthesis; D-alanine biosynthesis; D-alanine from L-alanine: step 1/1. Functionally, catalyzes the interconversion of L-alanine and D-alanine. May also act on other amino acids. This chain is Alanine racemase (alr), found in Synechocystis sp. (strain ATCC 27184 / PCC 6803 / Kazusa).